The primary structure comprises 252 residues: Triosephosphate isomerase (252 aa).

10–12 (NWK) is a substrate binding site. The Electrophile role is filled by His-96. Glu-168 (proton acceptor) is an active-site residue. Substrate-binding positions include Gly-174, Ser-214, and 235 to 236 (GG).

Belongs to the triosephosphate isomerase family. As to quaternary structure, homodimer.

It is found in the cytoplasm. It carries out the reaction D-glyceraldehyde 3-phosphate = dihydroxyacetone phosphate. The protein operates within carbohydrate biosynthesis; gluconeogenesis. It functions in the pathway carbohydrate degradation; glycolysis; D-glyceraldehyde 3-phosphate from glycerone phosphate: step 1/1. Functionally, involved in the gluconeogenesis. Catalyzes stereospecifically the conversion of dihydroxyacetone phosphate (DHAP) to D-glyceraldehyde-3-phosphate (G3P). The chain is Triosephosphate isomerase from Streptococcus pyogenes serotype M18 (strain MGAS8232).